Reading from the N-terminus, the 272-residue chain is 3-methyl-2-oxobutanoate hydroxymethyltransferase (272 aa).

Residues Asp-43 and Asp-82 each coordinate Mg(2+). 3-methyl-2-oxobutanoate contacts are provided by residues 43–44, Asp-82, and Lys-112; that span reads DS. Glu-114 serves as a coordination point for Mg(2+). The active-site Proton acceptor is the Glu-179.

The protein belongs to the PanB family. In terms of assembly, homodecamer; pentamer of dimers. The cofactor is Mg(2+).

The protein localises to the cytoplasm. It carries out the reaction 3-methyl-2-oxobutanoate + (6R)-5,10-methylene-5,6,7,8-tetrahydrofolate + H2O = 2-dehydropantoate + (6S)-5,6,7,8-tetrahydrofolate. It functions in the pathway cofactor biosynthesis; (R)-pantothenate biosynthesis; (R)-pantoate from 3-methyl-2-oxobutanoate: step 1/2. Catalyzes the reversible reaction in which hydroxymethyl group from 5,10-methylenetetrahydrofolate is transferred onto alpha-ketoisovalerate to form ketopantoate. The polypeptide is 3-methyl-2-oxobutanoate hydroxymethyltransferase (Staphylococcus aureus (strain Newman)).